The chain runs to 342 residues: Isopentenyl-diphosphate delta-isomerase (342 aa).

Substrate is bound at residue 11 to 12 (RK). FMN contacts are provided by residues serine 68, 69 to 71 (SMT), serine 99, and asparagine 127. Residue 99–101 (SMR) participates in substrate binding. Glutamine 162 lines the substrate pocket. Residue glutamate 163 participates in Mg(2+) binding. FMN-binding positions include lysine 194, threonine 224, 274-276 (GLK), and 295-296 (AG).

Belongs to the IPP isomerase type 2 family. As to quaternary structure, homooctamer. Dimer of tetramers. Requires FMN as cofactor. It depends on NADPH as a cofactor. Mg(2+) is required as a cofactor.

The protein localises to the cytoplasm. The catalysed reaction is isopentenyl diphosphate = dimethylallyl diphosphate. Its function is as follows. Involved in the biosynthesis of isoprenoids. Catalyzes the 1,3-allylic rearrangement of the homoallylic substrate isopentenyl (IPP) to its allylic isomer, dimethylallyl diphosphate (DMAPP). This Rickettsia canadensis (strain McKiel) protein is Isopentenyl-diphosphate delta-isomerase.